The primary structure comprises 233 residues: ATP-dependent dethiobiotin synthetase BioD (233 aa).

Residue 12 to 17 (GVGKTI) coordinates ATP. A Mg(2+)-binding site is contributed by T16. K37 is an active-site residue. A substrate-binding site is contributed by S41. ATP-binding positions include D51, 112–115 (EGAG), and 202–204 (PKL). Mg(2+) is bound by residues D51 and E112.

The protein belongs to the dethiobiotin synthetase family. As to quaternary structure, homodimer. It depends on Mg(2+) as a cofactor.

It is found in the cytoplasm. The enzyme catalyses (7R,8S)-7,8-diammoniononanoate + CO2 + ATP = (4R,5S)-dethiobiotin + ADP + phosphate + 3 H(+). Its pathway is cofactor biosynthesis; biotin biosynthesis; biotin from 7,8-diaminononanoate: step 1/2. Its function is as follows. Catalyzes a mechanistically unusual reaction, the ATP-dependent insertion of CO2 between the N7 and N8 nitrogen atoms of 7,8-diaminopelargonic acid (DAPA, also called 7,8-diammoniononanoate) to form a ureido ring. This is ATP-dependent dethiobiotin synthetase BioD from Bacillus velezensis (strain DSM 23117 / BGSC 10A6 / LMG 26770 / FZB42) (Bacillus amyloliquefaciens subsp. plantarum).